Reading from the N-terminus, the 80-residue chain is Caltrin (80 aa).

The N-terminal stretch at 1–32 (MMAGRRSWPAMATVLLALLVCLGELVDSKPQP) is a signal peptide.

Functionally, inhibits calcium transport into spermatozoa; it does not bind directly to calcium. Binds to calmodulin. Inhibits the growth of microorganisms. Seem to act as an antibiotic by permeabilizing the bacterial membrane. This Bos taurus (Bovine) protein is Caltrin (PYY2).